Reading from the N-terminus, the 36-residue chain is Glycine-rich protein GWK (36 aa).

The tract at residues 1 to 36 is disordered; sequence YKRGGGGWGGGGGWKGGGGGGGGWKGGGGGGKGGGG.

Possesses antifungal activity against a number of phytopathogenic fungi, including H.sativum and F.culmorum. This Cucumis melo (Muskmelon) protein is Glycine-rich protein GWK.